The primary structure comprises 133 residues: Histone H2A (133 aa).

Residues 1–10 (MTGGKSGGKA) show a composition bias toward gly residues. The segment at 1-24 (MTGGKSGGKASGSKNAQSRSSKAG) is disordered. An N6-acetyllysine mark is found at Lys-5 and Lys-9. Gln-106 is subject to N5-methylglutamine. Ser-130 carries the phosphoserine modification. A [ST]-Q motif motif is present at residues 130–131 (SQ).

The protein belongs to the histone H2A family. The nucleosome is a histone octamer containing two molecules each of H2A, H2B, H3 and H4 assembled in one H3-H4 heterotetramer and two H2A-H2B heterodimers. The octamer wraps approximately 147 bp of DNA. Post-translationally, phosphorylated to form H2AS128ph (gamma-H2A) in response to DNA double-strand breaks (DSBs) generated by exogenous genotoxic agents and by stalled replication forks. Phosphorylation is dependent on the DNA damage checkpoint kinases mec1/ATR and tel1/ATM, spreads on either side of a detected DSB site and may mark the surrounding chromatin for recruitment of proteins required for DNA damage signaling and repair. Gamma-H2A is removed from the DNA prior to the strand invasion-primer extension step of the repair process and subsequently dephosphorylated. Dephosphorylation is necessary for efficient recovery from the DNA damage checkpoint. In terms of processing, acetylated by esa1 to form H2AK4ac and H2AK7ac.

It localises to the nucleus. Its subcellular location is the chromosome. Functionally, core component of nucleosome which plays a central role in DNA double strand break (DSB) repair. Nucleosomes wrap and compact DNA into chromatin, limiting DNA accessibility to the cellular machineries which require DNA as a template. Histones thereby play a central role in transcription regulation, DNA repair, DNA replication and chromosomal stability. DNA accessibility is regulated via a complex set of post-translational modifications of histones, also called histone code, and nucleosome remodeling. The chain is Histone H2A (hta1) from Aspergillus clavatus (strain ATCC 1007 / CBS 513.65 / DSM 816 / NCTC 3887 / NRRL 1 / QM 1276 / 107).